Consider the following 165-residue polypeptide: Crossover junction endodeoxyribonuclease RuvC (165 aa).

Residues Asp-7, Glu-68, and His-142 contribute to the active site. Mg(2+) is bound by residues Asp-7, Glu-68, and His-142.

The protein belongs to the RuvC family. As to quaternary structure, homodimer which binds Holliday junction (HJ) DNA. The HJ becomes 2-fold symmetrical on binding to RuvC with unstacked arms; it has a different conformation from HJ DNA in complex with RuvA. In the full resolvosome a probable DNA-RuvA(4)-RuvB(12)-RuvC(2) complex forms which resolves the HJ. Mg(2+) serves as cofactor.

The protein localises to the cytoplasm. It carries out the reaction Endonucleolytic cleavage at a junction such as a reciprocal single-stranded crossover between two homologous DNA duplexes (Holliday junction).. In terms of biological role, the RuvA-RuvB-RuvC complex processes Holliday junction (HJ) DNA during genetic recombination and DNA repair. Endonuclease that resolves HJ intermediates. Cleaves cruciform DNA by making single-stranded nicks across the HJ at symmetrical positions within the homologous arms, yielding a 5'-phosphate and a 3'-hydroxyl group; requires a central core of homology in the junction. The consensus cleavage sequence is 5'-(A/T)TT(C/G)-3'. Cleavage occurs on the 3'-side of the TT dinucleotide at the point of strand exchange. HJ branch migration catalyzed by RuvA-RuvB allows RuvC to scan DNA until it finds its consensus sequence, where it cleaves and resolves the cruciform DNA. This Anaplasma marginale (strain St. Maries) protein is Crossover junction endodeoxyribonuclease RuvC.